We begin with the raw amino-acid sequence, 617 residues long: Proline--tRNA ligase (617 aa).

It belongs to the class-II aminoacyl-tRNA synthetase family. ProS type 1 subfamily. In terms of assembly, homodimer.

It is found in the cytoplasm. It catalyses the reaction tRNA(Pro) + L-proline + ATP = L-prolyl-tRNA(Pro) + AMP + diphosphate. Functionally, catalyzes the attachment of proline to tRNA(Pro) in a two-step reaction: proline is first activated by ATP to form Pro-AMP and then transferred to the acceptor end of tRNA(Pro). As ProRS can inadvertently accommodate and process non-cognate amino acids such as alanine and cysteine, to avoid such errors it has two additional distinct editing activities against alanine. One activity is designated as 'pretransfer' editing and involves the tRNA(Pro)-independent hydrolysis of activated Ala-AMP. The other activity is designated 'posttransfer' editing and involves deacylation of mischarged Ala-tRNA(Pro). The misacylated Cys-tRNA(Pro) is not edited by ProRS. This Streptococcus pneumoniae serotype 4 (strain ATCC BAA-334 / TIGR4) protein is Proline--tRNA ligase.